We begin with the raw amino-acid sequence, 388 residues long: Chorismate synthase (388 aa).

Residues Arg39 and Arg45 each coordinate NADP(+). Residues 130–132, 251–252, Gly296, 311–315, and Arg337 contribute to the FMN site; these read RSS, NA, and KPIPT.

This sequence belongs to the chorismate synthase family. In terms of assembly, homotetramer. FMNH2 is required as a cofactor.

The catalysed reaction is 5-O-(1-carboxyvinyl)-3-phosphoshikimate = chorismate + phosphate. The protein operates within metabolic intermediate biosynthesis; chorismate biosynthesis; chorismate from D-erythrose 4-phosphate and phosphoenolpyruvate: step 7/7. In terms of biological role, catalyzes the anti-1,4-elimination of the C-3 phosphate and the C-6 proR hydrogen from 5-enolpyruvylshikimate-3-phosphate (EPSP) to yield chorismate, which is the branch point compound that serves as the starting substrate for the three terminal pathways of aromatic amino acid biosynthesis. This reaction introduces a second double bond into the aromatic ring system. The sequence is that of Chorismate synthase from Streptococcus pyogenes serotype M5 (strain Manfredo).